The primary structure comprises 674 residues: Tripartite terminase subunit 3 (674 aa).

Residues 212-219 (VPRRHGKT) carry the Walker A motif motif. Residues 305-310 (LLLVDE) carry the Walker B motif motif. Glu310 functions as the For ATPase activity in the catalytic mechanism. Active-site for nuclease activity residues include Asp463, Glu534, and Asp651.

Belongs to the herpesviridae TRM3 protein family. In terms of assembly, interacts with the terminase subunits TRM1 and TRM2. Interacts with portal protein.

It localises to the host nucleus. Component of the molecular motor that translocates viral genomic DNA in empty capsid during DNA packaging. Forms a tripartite terminase complex together with TRM1 and TRM2 in the host cytoplasm. Once the complex reaches the host nucleus, it interacts with the capsid portal vertex. This portal forms a ring in which genomic DNA is translocated into the capsid. TRM3 carries an RNase H-like nuclease activity that plays an important role for the cleavage of concatemeric viral DNA into unit length genomes. This chain is Tripartite terminase subunit 3, found in Homo sapiens (Human).